The following is a 3110-amino-acid chain: MKAFESLKSFQQQQQQQQPPPQPPPPPPPPPQPPQPPPQGQPPPPPPLPGPAEEPLHRPKKELSATKKDRVNHCLTICENIVAQSLRNSPEFQKLLGIAMELFLLCSDDASRRRMVADECLNKVIKALMDSNLPRLQLELYKEIKKNGAPRSLRAALWRFAELAHLVRPQKCRPYLVNLLPCLTRTSKRPEESVQETLAAAVPKIMASFGNFANDNEIKVLLKAFIANLKSSSPTVRRTAAGSAVSICQHSRRTQYFYNWLLNVLLGLLVPMEEDHPTLLILGVLLTLRCLVPLLQQQVKDTSLKGSFGVTRKEMEVSPSAEQLVQVYELTLHHTQHQDHNVVTGALELLQQLFRTPPPELLQALTTPGGLGQLTLVREEAGGRGRSGSIVELLAGGGSSCSPVLSRKQKGKVLLGEEEALEDDSESRSDVSSSAFAASVKSEIGGELAASSSGVSTPGSVGHDIITEQPRSQHTLQADSVDLSGCDLTSAATDGDEEDILSHSSSQFSAVPSDPAMDLNDGTQASSPISDSSQTTTEGPDSAVTPSDSSEIVLDGADSQYLGVQIGQPQEEDREAAGVLSGEVSDVFRNSSLALQQAHLLERMGHSRQPSDSSVDKFVSKDEVAEAGDPESKPCRIKGDIGQPNDDDSAPLVHCVRLLSASFLLTGEKKALVPDRDVRVSVKALALSCIGAAVALHPESFFSKLYKVPLSTMESTEEQYVSDILNYIDHGDPQVRGATAILCGTLVYSILSRSRLRVGDWLGTIRALTGNTFSLVDCIPLLQKTLKDESSVTCKLACTAVRHCVLSLCSSSYSDLGLQLLIDMLPLKNSSYWLVRTELLETLAEIDFRLVSFLEAKAESLHRGPHHYTGFLKLQERVLNNVVIYLLGDEDPRVRHVAATTLTRLVPKLFYKCDQGQADPVEAVARDQSSVYLKLLMHETQPPSHFSVSTITRIYRGYSLLPSVTDVTMENNLSRVVAAVSHELITSTTRALTFGCCEALCVLSAAFPVCTWSLGWHCGVPPLSASDESRKSCTVGMASMILTLLSSAWFPLDLSAIQDALILAGNLLAASAPKSLRSSWASEEEGSSAATRQEEIWPALGDRTLVPMVEQLFSHLLKVINICAHVLDDETPGPAIKAALPSLTNPPSLSPIRRKGKEKEPGEQTSTPMSPKKGGEASTASRQSDTSGPVTASKSSSLGSFYHLPSYLRLHDVLKATHANYKVTLDLQNSTEKFGGFLRSALDVLSQILELATLQDIGKCVEEVLGYLKSCFSREPMMATVCVQQLLKTLFGTNLASQFDGLSSNPSKSQCRAQRLGSSSVRPGLYHYCFMAPYTHFTQALADASLRNMVQADQEHDASGWFDVLQKVSAQLKTNLTSVTKNRADKNAIHNHIRLFEPLVIKALKQYTTTTSVQLQKQVLDLLAQLVQLRVNYCLLDSDQVFIGFVLKQFEYIEVGQFRESEAIIPNIFFFLVLLSYERYHSKQIIGIPKIIQLCDGIMASGRKAVTHAIPALQPIVHDLFVLRGTNKADAGKELETQKEVVVSMLLRLIQYHQVLEMFILVLQQCHKENEDKWKRLSRQVADIILPMLAKQQMHIDSHEALGVLNTLFEILAPSSLRPVDMLLRSMFITPSTMASVSTVQLWISGILAILRVLISQSTEDIVLSRIQELSFSPYLISCPVINRLRDGDSNPTLGERSRGKQVKNLPEDTFSRFLLQLVGILLEDIVTKQLKVDMSEQQHTFYCQELGTLLMCLIHIFKSGMFRRITAAATRLFTSDGCEGSFYTLDSLNARVRAMVPTHPALVLLWCQILLLINHTDHRWWAEVQQTPKRHSLSCTKSLNPQISAEEDSGSAAQLGMCNREIVRRGALILFCDYVCQNLHDSEHLTWLIVNHIQDLISLSHEPPVQDFISAIHRNSAASGLFIQAIQSRCENLSTPTTLKKTLQCLEGIHLSQSGAVLTLYVDRLLGTPFRALARMVDTLACRRVEMLLAANLQSSMAQLPEEELNRIQEHLQNTGLAQRHQRLYSLLDRFRLSTVQDSLSPLPPVTSHPLDGDGHTSLETVNPDKDWYLQLVRSQCWTRSDSALLEGAELVNRIPAEDMSDFMMSSEFNLSLFAPCLSLGMSEIAGSQKSPLFEAARRVTLDRVTNVVQQLPAVHQVFQPFLPTEPTAYWSKLNDLFGDTTSYQSLTTLARALAQYLVVLSKVPAPLHLPPEKEGHTVKFVVMTLEALSWHLIHEQIPLSLDLQAGLDCCCLALQVPGLWGVLSSPEYVTHTCSLIHCVRFILEAIAVQPGDQLLGPESRSHTPRAVRKEEVDSDIQNLSHITSACEMVADMVESLQSVLALGHKRNSTLPSFLTAVLKNIVVSLARLPLVNSYTRVPPLVWKLGWSPKPGGDFGTVFPEIPVEFLQEKEVLKEFIYRINTLGWTSRTQFEETWATLLGVLVTQPLVMEQEESPPEEDTERTQIHVLAVQAITSLVLSAMAVPVAGNPAVSCLEQQPRNKPLKALDTRFGRKLSMIRGIVEQEIQEMVSQRENTATHHSHQAWDPVPSLLPATTGALISHDKLLLQINSEREPGNMSYKLGQVSIHSVWLGNNITPLREEEWDEEEEEEADAPAPTSPPVSPVNSRKHRAGVDIHSCSQFLLELYSRWILPSSAARRTPVILISEVVRSLLVVSDLFTDVPQFEMMYLTLTELRRVHPSEDEILIQYLVPATCKAAAVLGMDKTVAEPVSRLLESTLRSTHLPSQIGALHGILYVLECDLLDDTVKQLIPVVSDYLLSNLKGIAHCVNIHSQQHVLVMCATAFYLMENYPLDVGPEFSASVIQMCGVMLSGSEESTPSVIYHCALRGLERLLLSEQLSRLDTESLVKLSVDRVNVQSPHRAMAALGLMLTCMYTGKEKASPGRASDPSPATPDSESVIVAMERVSVLFDRIRKGFPCEARVVARILPQFLDDFFPPQDVMNKVIGEFLSNQQPYPQFMATVVYKVFQTLHSAGQSSMVRDWVMLSLSNFTQRTPVAMAMWSLSCFLVSASTSPWVSAILPHVISRMGKLEQVDVNLFCLVATDFYRHQIEEEFDRRAFQSVFEVVAAPGSPYHRLLACLQNVHKVTAC.

Residues 1–58 (MKAFESLKSFQQQQQQQQPPPQPPPPPPPPPQPPQPPPQGQPPPPPPLPGPAEEPLHR) are disordered. Lys2 bears the N6-acetyllysine mark. The segment covering 18–52 (QPPPQPPPPPPPPPQPPQPPPQGQPPPPPPLPGPA) has biased composition (pro residues). 2 positions are modified to N6-acetyllysine: Lys146 and Lys204. 2 HEAT repeats span residues 174 to 211 (PYLV…SFGN) and 216 to 253 (NEIK…HSRR). Lys313 carries the post-translational modification N6-acetyllysine. 3 positions are modified to phosphoserine: Ser387, Ser389, and Ser402. At Lys412 the chain carries N6-acetyllysine. The interval 462-473 (GHDIITEQPRSQ) is interaction with ZDHHC17. The interval 487–549 (DLTSAATDGD…PDSAVTPSDS (63 aa)) is disordered. Polar residues predominate over residues 521–549 (DGTQASSPISDSSQTTTEGPDSAVTPSDS). Gly522 is lipidated: N-myristoyl glycine. Residues Ser611 and Ser614 each carry the phosphoserine modification. HEAT repeat units lie at residues 773–810 (FSLV…SLCS) and 873–911 (KLQE…KLFY). A disordered region spans residues 1137–1195 (KAALPSLTNPPSLSPIRRKGKEKEPGEQTSTPMSPKKGGEASTASRQSDTSGPVTASKS). The segment covering 1140–1151 (LPSLTNPPSLSP) has biased composition (low complexity). Phosphoserine; by CDK5 occurs at positions 1150 and 1170. Polar residues predominate over residues 1178–1195 (STASRQSDTSGPVTASKS). Residues 1395 to 1432 (LFEPLVIKALKQYTTTTSVQLQKQVLDLLAQLVQLRVN) form an HEAT 5 repeat. Ser1845 bears the Phosphoserine mark. The Nuclear export signal signature appears at 2363–2372 (IVVSLARLPL). The disordered stretch occupies residues 2601–2628 (EEEWDEEEEEEADAPAPTSPPVSPVNSR). Residues 2602–2613 (EEWDEEEEEEAD) are compositionally biased toward acidic residues.

This sequence belongs to the huntingtin family. Interacts with PFN1. Interacts through its N-terminus with PRPF40A. Interacts with PQBP1. Interacts with SETD2. Interacts with SH3GLB1. Interacts with SYVN. Interacts with TPR; the interaction is inhibited by forms of Huntingtin with expanded polyglutamine stretch. Interacts with ZDHHC13 (via ANK repeats). Interacts with ZDHHC17 (via ANK repeats). Interacts with F8A1/F8A2/F8A3. Found in a complex with F8A1/F8A2/F8A3, HTT and RAB5A; mediates the recruitment of HTT by RAB5A. Phosphorylation at Ser-1150 and Ser-1170 by CDK5 in response to DNA damage in nuclei of neurons protects neurons against polyglutamine expansion as well as DNA damage mediated toxicity. In terms of processing, cleaved by caspases downstream of the polyglutamine stretch. Post-translationally, myristoylated at Gly-522, following proteolytic cleavage at Asp-521. In terms of tissue distribution, expressed to a high degree in all the regions of the brain of adults and in meiotic cells of the testis. In addition, very low levels are detected in various non-neuronal tissues (heart, muscle, liver, lung and kidney).

It localises to the cytoplasm. The protein localises to the nucleus. The protein resides in the cytoplasmic vesicle. It is found in the autophagosome. Functionally, may play a role in microtubule-mediated transport or vesicle function. In terms of biological role, promotes the formation of autophagic vesicles. This Rattus norvegicus (Rat) protein is Huntingtin (Htt).